A 697-amino-acid chain; its full sequence is Phenoloxidase 1 (697 aa).

The propeptide at 1-101 is removed by PPAE1; the sequence is MSDMSGDVVE…PKHQEMATEV (101 aa). 3 residues coordinate Cu cation: His-217, His-221, and His-247. N-linked (GlcNAc...) asparagine glycosylation is found at Asn-260 and Asn-313. Glu-355 (proton acceptor) is an active-site residue. His-370, His-374, and His-410 together coordinate Cu cation. N-linked (GlcNAc...) asparagine glycans are attached at residues Asn-498 and Asn-552. Cystine bridges form between Cys-587–Cys-631 and Cys-589–Cys-638.

This sequence belongs to the tyrosinase family. As to quaternary structure, heterodimer. Cu(2+) serves as cofactor. Post-translationally, activated by the cleavage of the N-terminal propeptide by PPAE1. In terms of tissue distribution, expressed in hemocytes.

The protein resides in the secreted. The catalysed reaction is L-tyrosine + O2 = L-dopaquinone + H2O. It carries out the reaction 2 L-dopa + O2 = 2 L-dopaquinone + 2 H2O. With respect to regulation, activated by a cationic detergent cetyl pyridinium chloride (CPC). Inhibited by phenyl thio-urea (PTU). Its function is as follows. This is a copper-containing oxidase that functions in the formation of pigments such as melanins and other polyphenolic compounds. Catalyzes the rate-limiting conversions of tyrosine to DOPA, DOPA to DOPA-quinone and possibly 5,6 dihydroxyindole to indole-5'6 quinone. Catalyzes the oxidation of 4-methylcatechol. Binds to the surface of hemocytes and is involved in hemocyte melanization. The polypeptide is Phenoloxidase 1 (Spodoptera litura (Asian cotton leafworm)).